A 339-amino-acid chain; its full sequence is MTKKRVLSGVQPTGAIHIGNWLGAIRNWVSLQNEYDTYVCVVDLHAITVPHDPQQLKENTLRTAALYVACGMDPKKCSIFVQSHISAHSELCWLLNCVTPLNWMERMIQFKEKAIKQGDNVSIGLLDYPVLMAADILLYDADLVPVGEDQKQHLELARDIAQQRVNSRFNKESKSILKIPKPLIMKEGGKIMSLIDGNMKMSKSDPNENSRIALLDSPEIIKKKIKRAKTDSFLGLEFDNNQRPEANNLLGIYSMVSNQNREAVQKEFSNIGWGKFKPILTDAIIESLNPIQQKYYSLIKDKTELNNILNKGYIKANTISNQTLKRVRNALGFLDKPIS.

ATP is bound by residues 11 to 13 (QPT) and 19 to 20 (GN). Residues 12–20 (PTGAIHIGN) carry the 'HIGH' region motif. Residue aspartate 135 coordinates L-tryptophan. ATP contacts are provided by residues 147–149 (GED), isoleucine 191, and 200–204 (KMSKS). Residues 200–204 (KMSKS) carry the 'KMSKS' region motif.

It belongs to the class-I aminoacyl-tRNA synthetase family. Homodimer.

It is found in the cytoplasm. It carries out the reaction tRNA(Trp) + L-tryptophan + ATP = L-tryptophyl-tRNA(Trp) + AMP + diphosphate + H(+). Functionally, catalyzes the attachment of tryptophan to tRNA(Trp). The protein is Tryptophan--tRNA ligase of Prochlorococcus marinus (strain SARG / CCMP1375 / SS120).